We begin with the raw amino-acid sequence, 609 residues long: Phosphoenolpyruvate carboxykinase [GTP] (609 aa).

Substrate contacts are provided by residues Arg81 and 220 to 222; that span reads YGG. Positions 229 and 249 each coordinate Mn(2+). Ser271 provides a ligand contact to substrate. A GTP-binding site is contributed by 272 to 277; sequence ACGKTN. The active site involves Cys273. Residue Asp296 coordinates Mn(2+). Residue 387–389 coordinates substrate; it reads NSR. GTP is bound by residues Arg389, Arg420, and 515-518; that span reads FGEN.

This sequence belongs to the phosphoenolpyruvate carboxykinase [GTP] family. Monomer. The cofactor is Mn(2+).

It is found in the cytoplasm. It catalyses the reaction oxaloacetate + GTP = phosphoenolpyruvate + GDP + CO2. Its pathway is carbohydrate biosynthesis; gluconeogenesis. Its function is as follows. Catalyzes the conversion of oxaloacetate (OAA) to phosphoenolpyruvate (PEP), the rate-limiting step in the metabolic pathway that produces glucose from lactate and other precursors derived from the citric acid cycle. This is Phosphoenolpyruvate carboxykinase [GTP] from Mycobacterium marinum (strain ATCC BAA-535 / M).